The primary structure comprises 426 residues: Pregnancy-specific beta-1-glycoprotein 9 (426 aa).

The signal sequence occupies residues 1–34 (MGPLPAPSCTQRITWKGLLLTASLLNFWNPPTTA). Positions 35–144 (EVTIEAQPPK…IRHFTFTLYL (110 aa)) constitute an Ig-like V-type domain. 2 N-linked (GlcNAc...) asparagine glycosylation sites follow: asparagine 104 and asparagine 111. A Cell attachment site motif is present at residues 127–129 (RGD). Ig-like C2-type domains are found at residues 147-234 (PKPY…VTLN), 242-326 (PYIT…PVIL), and 335-410 (PRIY…KSMT). 3 cysteine pairs are disulfide-bonded: cysteine 169–cysteine 217, cysteine 262–cysteine 310, and cysteine 354–cysteine 394. Asparagine 199, asparagine 268, asparagine 303, and asparagine 387 each carry an N-linked (GlcNAc...) asparagine glycan.

The protein belongs to the immunoglobulin superfamily. CEA family. In terms of assembly, interacts with latency-associated peptide; leading to TGFB1 activation.

Its subcellular location is the secreted. Its function is as follows. Binds to the small latent transforming growth factor-beta complex, consisting of the N-terminal TGFB1 latency-associated peptide (LAP) and the mature form of TGFB1, thereby leading to the activation of TGFB1. The activation of TGFB1 leads to stimulation of naive CD4(+) T-cells to increase FoxP3 expression and to an increase in the number of FoxP3(+) regulatory T-cells. Induces the differentiation of a suppressive CD4(+)LAP(+)FoxP3(-) T-cell subset. Induces the secretion of TGFB1 in macrophages, but not in activated CD4(+) T-cells. May reduce the expression of several pro-inflammatory cytokines and chemokines by CD4(+) T-cells, including IL2 and IL6. The protein is Pregnancy-specific beta-1-glycoprotein 9 (PSG9) of Homo sapiens (Human).